Reading from the N-terminus, the 775-residue chain is Zinc finger protein GLIS3 (775 aa).

Disordered stretches follow at residues 121–147 and 282–314; these read TESSHSPYPSPRHSSTRSHSARSKKRA and PGSTVDLPPAPPLPPLPPPPGPPPPYHAHAHLH. Over residues 123-133 the composition is skewed to low complexity; that stretch reads SSHSPYPSPRH. Over residues 134 to 147 the composition is skewed to basic residues; that stretch reads SSTRSHSARSKKRA. The segment covering 289 to 307 has biased composition (pro residues); it reads PPAPPLPPLPPPPGPPPPY. Residues 345–370 form a C2H2-type 1 zinc finger; the sequence is HCCRWIDCSALYDQQEELVRHIEKVH. Residues 379-406 form a C2H2-type 2; atypical zinc finger; the sequence is FTCFWAGCPRRYKPFNARYKLLIHMRVH. C2H2-type zinc fingers lie at residues 412-436, 442-466, and 472-496; these read NKCTFEGCEKAFSRLENLKIHLRSH, YLCQHPGCQKAFSNSSDRAKHQRTH, and YACQIPGCTKRYTDPSSLRKHVKAH. Disordered stretches follow at residues 485–512 and 529–665; these read DPSSLRKHVKAHSSKEQQARKKLRSSTE and PATS…QPNG. The Bipartite nuclear localization signal motif lies at 491–507; the sequence is KHVKAHSSKEQQARKKL. The segment covering 497-512 has biased composition (basic and acidic residues); the sequence is SSKEQQARKKLRSSTE. Polar residues-rich tracts occupy residues 557–567, 588–600, and 632–663; these read IFSSNYSSRSG, VQGSPHNPSSQLP, and SILQRTQPPYTQQPSGSHLKSYQPETNSSFQP.

The protein belongs to the GLI C2H2-type zinc-finger protein family. In terms of tissue distribution, in the adult, expressed at high levels in the kidney and at lower levels in the brain, skeletal muscle, pancreas, liver, lung, thymus and ovary.

Its subcellular location is the nucleus. In terms of biological role, acts both as a repressor and an activator of transcription. Binds to the consensus sequence 5'-GACCACCCAC-3'. The chain is Zinc finger protein GLIS3 (GLIS3) from Homo sapiens (Human).